A 462-amino-acid chain; its full sequence is Cysteine--tRNA ligase (462 aa).

Cys30 is a Zn(2+) binding site. The 'HIGH' region signature appears at 32–42 (PTVYDRAHLGN). Zn(2+)-binding residues include Cys221, His246, and Glu250. Residues 279–283 (KMSKS) carry the 'KMSKS' region motif. Lys282 contacts ATP.

It belongs to the class-I aminoacyl-tRNA synthetase family. Monomer. It depends on Zn(2+) as a cofactor.

It is found in the cytoplasm. The catalysed reaction is tRNA(Cys) + L-cysteine + ATP = L-cysteinyl-tRNA(Cys) + AMP + diphosphate. The sequence is that of Cysteine--tRNA ligase from Paracoccus denitrificans (strain Pd 1222).